The primary structure comprises 164 residues: Ribosome maturation factor RimM (164 aa).

Residues K90–W161 form the PRC barrel domain.

Belongs to the RimM family. Binds ribosomal protein uS19.

It is found in the cytoplasm. In terms of biological role, an accessory protein needed during the final step in the assembly of 30S ribosomal subunit, possibly for assembly of the head region. Essential for efficient processing of 16S rRNA. May be needed both before and after RbfA during the maturation of 16S rRNA. It has affinity for free ribosomal 30S subunits but not for 70S ribosomes. The sequence is that of Ribosome maturation factor RimM from Clostridium botulinum (strain Langeland / NCTC 10281 / Type F).